Here is a 441-residue protein sequence, read N- to C-terminus: Ribosomal protein uS12 methylthiotransferase RimO (441 aa).

One can recognise an MTTase N-terminal domain in the interval 8–118 (PKIGFVSLGC…VLQHVHHYVP (111 aa)). [4Fe-4S] cluster is bound by residues Cys-17, Cys-53, Cys-82, Cys-150, Cys-154, and Cys-157. Residues 136–373 (LTPRHYAYLK…MQLQQQISAE (238 aa)) form the Radical SAM core domain. The region spanning 376–441 (QEKVGREILV…DEYDLWGSRV (66 aa)) is the TRAM domain.

It belongs to the methylthiotransferase family. RimO subfamily. Requires [4Fe-4S] cluster as cofactor.

It is found in the cytoplasm. It carries out the reaction L-aspartate(89)-[ribosomal protein uS12]-hydrogen + (sulfur carrier)-SH + AH2 + 2 S-adenosyl-L-methionine = 3-methylsulfanyl-L-aspartate(89)-[ribosomal protein uS12]-hydrogen + (sulfur carrier)-H + 5'-deoxyadenosine + L-methionine + A + S-adenosyl-L-homocysteine + 2 H(+). Functionally, catalyzes the methylthiolation of an aspartic acid residue of ribosomal protein uS12. The protein is Ribosomal protein uS12 methylthiotransferase RimO of Salmonella heidelberg (strain SL476).